A 471-amino-acid polypeptide reads, in one-letter code: Lincomycin resistance protein LmrB (471 aa).

The next 13 membrane-spanning stretches (helical) occupy residues 15–34 (PIIA…ETAL), 55–77 (LTTG…LQWF), 82–104 (LFFT…PTFA), 111–131 (VVQA…ILLI), 141–163 (MGMI…GLIL), 170–187 (WIFW…LFGM), 202–224 (DILS…SSAG), 231–253 (ATVL…RQLT), 268–290 (MFTL…MILL), 297–319 (SLAL…NGLM), 329–351 (AYGP…FFLT), 358–380 (SALT…MMPA), and 445–467 (GIQN…SLFI).

This sequence belongs to the major facilitator superfamily. EmrB family.

It is found in the cell membrane. Functionally, proton-dependent transporter. May mediate the efflux of lincomycin. This is Lincomycin resistance protein LmrB (lmrB) from Listeria innocua serovar 6a (strain ATCC BAA-680 / CLIP 11262).